The chain runs to 251 residues: Coproheme decarboxylase (251 aa).

Residues Arg133, 147-151 (YPMSK), His174, Gln187, and Ser225 contribute to the Fe-coproporphyrin III site. The active site involves Tyr147.

The protein belongs to the ChdC family. Type 1 subfamily. In terms of assembly, homopentamer. Homohexamer in solution. It depends on Fe-coproporphyrin III as a cofactor.

It carries out the reaction Fe-coproporphyrin III + 2 H2O2 + 2 H(+) = heme b + 2 CO2 + 4 H2O. The catalysed reaction is Fe-coproporphyrin III + H2O2 + H(+) = harderoheme III + CO2 + 2 H2O. It catalyses the reaction harderoheme III + H2O2 + H(+) = heme b + CO2 + 2 H2O. The protein operates within porphyrin-containing compound metabolism; protoheme biosynthesis. Involved in coproporphyrin-dependent heme b biosynthesis. Catalyzes the decarboxylation of Fe-coproporphyrin III (coproheme) to heme b (protoheme IX), the last step of the pathway. The reaction occurs in a stepwise manner with a three-propionate intermediate. The polypeptide is Coproheme decarboxylase (Listeria monocytogenes serovar 1/2a (strain ATCC BAA-679 / EGD-e)).